Here is a 299-residue protein sequence, read N- to C-terminus: Large ribosomal subunit protein uL18 (299 aa).

It belongs to the universal ribosomal protein uL18 family. In terms of assembly, component of the large ribosomal subunit (LSU). Interacts with Fmr1 to form the RNA-induced silencing complex (RISC), a ribonucleoprotein (RNP) complex involved in translation regulation, other components of the complex are Rm62, RpL11, AGO2 and Dcr-1.

The protein resides in the cytoplasm. It is found in the nucleus. Its function is as follows. Component of the ribosome, a large ribonucleoprotein complex responsible for the synthesis of proteins in the cell. The small ribosomal subunit (SSU) binds messenger RNAs (mRNAs) and translates the encoded message by selecting cognate aminoacyl-transfer RNA (tRNA) molecules. The large subunit (LSU) contains the ribosomal catalytic site termed the peptidyl transferase center (PTC), which catalyzes the formation of peptide bonds, thereby polymerizing the amino acids delivered by tRNAs into a polypeptide chain. The nascent polypeptides leave the ribosome through a tunnel in the LSU and interact with protein factors that function in enzymatic processing, targeting, and the membrane insertion of nascent chains at the exit of the ribosomal tunnel. The chain is Large ribosomal subunit protein uL18 (RpL5) from Drosophila melanogaster (Fruit fly).